The following is an 816-amino-acid chain: Pentatricopeptide repeat-containing protein At5g12100, mitochondrial (816 aa).

The transit peptide at 1 to 39 (MVTRLRLVSRSSRYATVKFTDSVSACSCRRLFSASTDPE) directs the protein to the mitochondrion. A disordered region spans residues 34 to 57 (ASTDPEPESQPEQAPPTNPVTGDE). 20 PPR repeats span residues 108 to 142 (HDFS…GIYP), 143 to 177 (SSDS…DFRP), 178 to 212 (SKFM…RIYP), 213 to 247 (SVFI…RLLP), 248 to 282 (SLIT…HIEP), 283 to 317 (SLIT…GFVP), 318 to 352 (DAFT…GVKM), 353 to 387 (NAYT…GLVP), 388 to 422 (NEVI…GMKP), 423 to 457 (DHLA…GVSP), 458 to 492 (SVET…GTMP), 493 to 527 (NVVS…GVSP), 528 to 562 (KVRI…GIEL), 563 to 597 (NLVT…GLKP), 598 to 632 (DVFT…GIKP), 633 to 662 (TLKT…MSLK), 664 to 698 (DLLV…SIGL), 699 to 733 (DKTT…EMEP), 734 to 768 (EADT…GFLL), and 769 to 803 (DVCI…MLGD).

Belongs to the PPR family. P subfamily.

It is found in the mitochondrion. This is Pentatricopeptide repeat-containing protein At5g12100, mitochondrial from Arabidopsis thaliana (Mouse-ear cress).